The following is a 2564-amino-acid chain: Highly reducing polyketide synthase 40 (2564 aa).

Residues 8–432 (PEPIAIIGMS…GTNAHVIVDR (425 aa)) form the Ketosynthase family 3 (KS3) domain. Active-site for beta-ketoacyl synthase activity residues include cysteine 181, histidine 317, and histidine 358. Positions 435–482 (EHNHSNGTNGTNGTHHHNGTNGSNGNGTNGTNGTNGTDGFHDTESISD) are disordered. Positions 439–455 (SNGTNGTNGTHHHNGTN) are enriched in low complexity. Residues 473-482 (GFHDTESISD) are compositionally biased toward basic and acidic residues. The malonyl-CoA:ACP transacylase (MAT) domain stretch occupies residues 580–914 (YVFGGQGAQY…SAAENMLRTL (335 aa)). The N-terminal hotdog fold stretch occupies residues 973 to 1113 (HELLGNLSAD…GRIRAVVDQG (141 aa)). The interval 973 to 1280 (HELLGNLSAD…GLRTAQLPSD (308 aa)) is dehydratase (DH) domain. A PKS/mFAS DH domain is found at 973 to 1283 (HELLGNLSAD…TAQLPSDVVN (311 aa)). The active-site Proton acceptor; for dehydratase activity is the histidine 1005. The interval 1130 to 1283 (AASVPHHITS…TAQLPSDVVN (154 aa)) is C-terminal hotdog fold. The active-site Proton donor; for dehydratase activity is aspartate 1199. A methyltransferase (CMet) domain region spans residues 1451 to 1556 (LEVGGGTASA…RQLLRPGGTL (106 aa)). The segment at 1854-2167 (GLLETFRWVD…AGKHMGKVIL (314 aa)) is enoyl reductase (ER) domain. The segment at 2191–2370 (ATYLLVGGFG…SFAIDVGVVS (180 aa)) is ketoreductase (KR) domain. Positions 2472-2549 (EALDAVGQAV…ELIHLVAGKS (78 aa)) constitute a Carrier domain. Serine 2509 is modified (O-(pantetheine 4'-phosphoryl)serine).

It participates in secondary metabolite biosynthesis. In terms of biological role, highly reducing polyketide synthase; part of the gene cluster that mediates the biosynthesis of the lipopeptides W493 A and B. W493 A and B consist of six amino acid residues D-allo-thr, L-Ala, D-Ala, L-Gln, D-Tyr, and L-Val/L-Ile linked to a 3-hydroxy-4-methyltetradecanoic acid polyketide chain. The biosynthesis starts with formation of the linear polyketide chain by the highly reducing polyketide synthase PKS40. The gene cluster contains a putative acyl-CoA ligase (FPSE_09184) for formation of a CoA thioester polyketide. The thiol bond could be hydrolyzed by the putative thioesterase (FPSE_09186) and then accepted by the first T domain in module 1 of NRPS32. The second T domain is responsible for accepting a threonine, which is adenylated by the A domain and epimerized to the D-allo-threonine formed by the E domain. The five successive modules incorporate Ala, Ala, Gln, Tyr, and Val/Ile into the final product, which is released by cyclization. This is Highly reducing polyketide synthase 40 from Fusarium pseudograminearum (strain CS3096) (Wheat and barley crown-rot fungus).